We begin with the raw amino-acid sequence, 391 residues long: Ferrochelatase (391 aa).

2 residues coordinate Fe cation: histidine 196 and glutamate 281.

This sequence belongs to the ferrochelatase family.

It localises to the cytoplasm. The enzyme catalyses heme b + 2 H(+) = protoporphyrin IX + Fe(2+). Its pathway is porphyrin-containing compound metabolism; protoheme biosynthesis; protoheme from protoporphyrin-IX: step 1/1. Its function is as follows. Catalyzes the ferrous insertion into protoporphyrin IX. The sequence is that of Ferrochelatase from Prochlorococcus marinus (strain MIT 9312).